Here is a 180-residue protein sequence, read N- to C-terminus: ATP-dependent protease subunit HslV (180 aa).

Residue threonine 5 is part of the active site. The Na(+) site is built by glycine 161, cysteine 164, and threonine 167.

Belongs to the peptidase T1B family. HslV subfamily. In terms of assembly, a double ring-shaped homohexamer of HslV is capped on each side by a ring-shaped HslU homohexamer. The assembly of the HslU/HslV complex is dependent on binding of ATP.

It localises to the cytoplasm. It carries out the reaction ATP-dependent cleavage of peptide bonds with broad specificity.. With respect to regulation, allosterically activated by HslU binding. In terms of biological role, protease subunit of a proteasome-like degradation complex believed to be a general protein degrading machinery. In Campylobacter fetus subsp. fetus (strain 82-40), this protein is ATP-dependent protease subunit HslV.